A 114-amino-acid chain; its full sequence is Ribonuclease P protein component (114 aa).

This sequence belongs to the RnpA family. In terms of assembly, consists of a catalytic RNA component (M1 or rnpB) and a protein subunit.

It catalyses the reaction Endonucleolytic cleavage of RNA, removing 5'-extranucleotides from tRNA precursor.. In terms of biological role, RNaseP catalyzes the removal of the 5'-leader sequence from pre-tRNA to produce the mature 5'-terminus. It can also cleave other RNA substrates such as 4.5S RNA. The protein component plays an auxiliary but essential role in vivo by binding to the 5'-leader sequence and broadening the substrate specificity of the ribozyme. This Legionella pneumophila (strain Paris) protein is Ribonuclease P protein component.